A 193-amino-acid polypeptide reads, in one-letter code: Recombination protein RecR (193 aa).

The C4-type zinc-finger motif lies at 61–76 (CSSCNALSESEVCEIC). Positions 84–170 (SQLCMVLHPR…TFTKIAQGVP (87 aa)) constitute a Toprim domain.

It belongs to the RecR family.

May play a role in DNA repair. It seems to be involved in an RecBC-independent recombinational process of DNA repair. It may act with RecF and RecO. This is Recombination protein RecR from Helicobacter pylori (strain G27).